The sequence spans 399 residues: Elongation factor Tu (399 aa).

One can recognise a tr-type G domain in the interval 10-204 (KPHVNIGTIG…AVDSSIPEPE (195 aa)). The segment at 19–26 (GHVDHGKT) is G1. 19–26 (GHVDHGKT) contacts GTP. A Mg(2+)-binding site is contributed by Thr26. Residues 60-64 (GITIN) are G2. A G3 region spans residues 81–84 (DCPG). Residues 81-85 (DCPGH) and 136-139 (NKCD) each bind GTP. The tract at residues 136–139 (NKCD) is G4. The segment at 174–176 (SGL) is G5.

It belongs to the TRAFAC class translation factor GTPase superfamily. Classic translation factor GTPase family. EF-Tu/EF-1A subfamily. As to quaternary structure, monomer.

It localises to the cytoplasm. The enzyme catalyses GTP + H2O = GDP + phosphate + H(+). In terms of biological role, GTP hydrolase that promotes the GTP-dependent binding of aminoacyl-tRNA to the A-site of ribosomes during protein biosynthesis. The protein is Elongation factor Tu of Synechococcus sp. (strain CC9605).